A 159-amino-acid polypeptide reads, in one-letter code: RNA pyrophosphohydrolase (159 aa).

A Nudix hydrolase domain is found at 6 to 149; that stretch reads GFRPNVGIIL…KREVYRRALK (144 aa). The Nudix box signature appears at 38–59; it reads GGINPDETPEDALYRELNEEVG.

Belongs to the Nudix hydrolase family. RppH subfamily. Requires a divalent metal cation as cofactor.

In terms of biological role, accelerates the degradation of transcripts by removing pyrophosphate from the 5'-end of triphosphorylated RNA, leading to a more labile monophosphorylated state that can stimulate subsequent ribonuclease cleavage. The chain is RNA pyrophosphohydrolase from Pseudomonas fluorescens (strain ATCC BAA-477 / NRRL B-23932 / Pf-5).